The following is a 354-amino-acid chain: L-lactate dehydrogenase (354 aa).

Residues 73 to 78 (DAVPDK) and R120 each bind NAD(+). Substrate is bound by residues R127, N159, and R190. NAD(+) is bound at residue N159. H214 serves as the catalytic Proton acceptor. T269 serves as a coordination point for substrate. Positions 302–332 (HGIPDGTTSSSACPPRRPRRRPGRREMELTE) are disordered.

This sequence belongs to the LDH/MDH superfamily. LDH family. Homotetramer.

It catalyses the reaction (S)-lactate + NAD(+) = pyruvate + NADH + H(+). The protein operates within fermentation; pyruvate fermentation to lactate; (S)-lactate from pyruvate: step 1/1. In Zea mays (Maize), this protein is L-lactate dehydrogenase.